A 211-amino-acid polypeptide reads, in one-letter code: Urease accessory protein UreF (211 aa).

The disordered stretch occupies residues 71 to 93; that stretch reads DDADRETDARTPAPAARHASRSQ.

This sequence belongs to the UreF family. In terms of assembly, ureD, UreF and UreG form a complex that acts as a GTP-hydrolysis-dependent molecular chaperone, activating the urease apoprotein by helping to assemble the nickel containing metallocenter of UreC. The UreE protein probably delivers the nickel.

It localises to the cytoplasm. Functionally, required for maturation of urease via the functional incorporation of the urease nickel metallocenter. The chain is Urease accessory protein UreF from Mycobacterium tuberculosis (strain ATCC 25177 / H37Ra).